The following is a 320-amino-acid chain: Pyrroline-5-carboxylate reductase 2 (320 aa).

Serine 2 carries the N-acetylserine modification. Residues 6–11 (IGAGQL) and serine 34 each bind NADP(+). 9 residues coordinate NADPH: alanine 8, glutamine 10, leucine 11, serine 34, glutamate 36, asparagine 56, valine 70, lysine 71, and alanine 97. Residues asparagine 56, 69–72 (AVKP), and 95–97 (CAA) contribute to the NADP(+) site. Glutamate 164 serves as a coordination point for L-proline. Asparagine 230 serves as a coordination point for NADPH. The L-proline site is built by alanine 237 and threonine 238. The segment at 293–320 (ESPTVSTLAPPSSGKLLTRNPAQGSKRE) is disordered. Serine 304 is modified (phosphoserine).

Belongs to the pyrroline-5-carboxylate reductase family. In terms of assembly, homodecamer; composed of 5 homodimers. Interacts with LTO1.

It localises to the cytoplasm. Its subcellular location is the mitochondrion. It catalyses the reaction L-proline + NADP(+) = (S)-1-pyrroline-5-carboxylate + NADPH + 2 H(+). The catalysed reaction is L-proline + NAD(+) = (S)-1-pyrroline-5-carboxylate + NADH + 2 H(+). Its pathway is amino-acid biosynthesis; L-proline biosynthesis; L-proline from L-glutamate 5-semialdehyde: step 1/1. In terms of biological role, oxidoreductase that catalyzes the last step in proline biosynthesis, which corresponds to the reduction of pyrroline-5-carboxylate to L-proline using NAD(P)H. At physiologic concentrations, has higher specific activity in the presence of NADH. Involved in cellular response to oxidative stress. In some cell types, such as erythrocytes, its primary function may be the generation of NADP(+). In Rattus norvegicus (Rat), this protein is Pyrroline-5-carboxylate reductase 2.